A 355-amino-acid polypeptide reads, in one-letter code: RNA binding protein fox-1 homolog 1 (355 aa).

A disordered region spans residues 1 to 123 (MNCEREQLRG…QPKRLHVSNI (123 aa)). Residues 70-112 (QSHSEQSAADTSAHTVSGTATTDDSAPTDGQPQTQPSENTENK) show a composition bias toward polar residues. In terms of domain architecture, RRM spans 116–174 (KRLHVSNIPFRFRDPDLRQMFGGFGFVTFENSADADRAREKLHGTVVEGRKIEVNNATA). The residue at position 298 (Arg-298) is an Asymmetric dimethylarginine.

Binds to the C-terminus of ATXN2.

Its subcellular location is the nucleus. The protein resides in the cytoplasm. In terms of biological role, RNA-binding protein that regulates alternative splicing events by binding to 5'-UGCAUGU-3' elements. Prevents binding of U2AF2 to the 3'-splice site. Regulates alternative splicing of tissue-specific exons and of differentially spliced exons during erythropoiesis. This chain is RNA binding protein fox-1 homolog 1 (RBFOX1), found in Bos taurus (Bovine).